The primary structure comprises 221 residues: Glutathione S-transferase class-mu 26 kDa isozyme 1 (221 aa).

Positions 2 to 82 constitute a GST N-terminal domain; sequence PAKLGYWKIR…YIADKHGMIG (81 aa). Residues 7–8, 40–44, 53–54, and 66–67 each bind glutathione; these read YW, WFSKK, NL, and QS. The GST C-terminal domain occupies 84 to 202; that stretch reads TPEERARVSM…ESNRFIKWPL (119 aa). Y110 contributes to the substrate binding site.

This sequence belongs to the GST superfamily. Mu family. Homodimer.

It carries out the reaction RX + glutathione = an S-substituted glutathione + a halide anion + H(+). Functionally, conjugation of reduced glutathione to a wide number of exogenous and endogenous hydrophobic electrophiles. Its function is as follows. GST isoenzymes appear to play a central role in the parasite detoxification system. Other functions are also suspected including a role in increasing the solubility of haematin in the parasite gut. In Fasciola hepatica (Liver fluke), this protein is Glutathione S-transferase class-mu 26 kDa isozyme 1.